The sequence spans 150 residues: MNEIRNIESDPIYRNRLANMLVDRILKNGKKSLAYQIFYQAMKRIRQKTNRNPLSVLRQAVRGVTPDVVTETKRVGGSTYRVPIEVVPAKGKALAIRWLLIACRKRSGRSMALRLSDELIDAARNSGSAIRKKEETHKVAEANKAFAHFR.

The protein belongs to the universal ribosomal protein uS7 family. Part of the 30S ribosomal subunit.

It localises to the plastid. Its subcellular location is the chloroplast. Functionally, one of the primary rRNA binding proteins, it binds directly to 16S rRNA where it nucleates assembly of the head domain of the 30S subunit. This Adiantum capillus-veneris (Maidenhair fern) protein is Small ribosomal subunit protein uS7cz/uS7cy (rps7-A).